Reading from the N-terminus, the 603-residue chain is Matrix metalloproteinase-17 (603 aa).

An N-terminal signal peptide occupies residues 1–35; it reads MRRRAARGPGPPPPGPGLSRLPLPLLLLLALGTRG. A propeptide spanning residues 36 to 125 is cleaved from the precursor; the sequence is GCAAPAPAPR…PVLTQARRRR (90 aa). The Cysteine switch signature appears at 108–115; the sequence is PRCSLPDL. Cys-110 is a Zn(2+) binding site. Asn-137 carries an N-linked (GlcNAc...) asparagine glycan. His-248 is a Zn(2+) binding site. Residue Glu-249 is part of the active site. Zn(2+) contacts are provided by His-252 and His-258. A disordered region spans residues 301 to 329; the sequence is SPTAQPEEPPLLPEPPDNRSSAPPRKDVP. Residue Asn-318 is glycosylated (N-linked (GlcNAc...) asparagine). Cys-332 and Cys-523 form a disulfide bridge. Hemopexin repeat units lie at residues 333 to 378, 382 to 427, 428 to 475, and 476 to 523; these read STHF…WRGL, LDSV…FSLP, PGGI…WRGV, and PSTL…WLVC. The disordered stretch occupies residues 537–571; the sequence is DAAEGPRAPPGQHDQSRSEDGYEVCSCTSGASSPP. Residue Ser-565 is the site of GPI-anchor amidated serine attachment. Residues 566 to 603 constitute a propeptide, removed in mature form; the sequence is GASSPPGAPGPLVAATMLLLLPPLSPGALWTAAQALTL.

The protein belongs to the peptidase M10A family. It depends on Zn(2+) as a cofactor. Ca(2+) is required as a cofactor. In terms of processing, the precursor is cleaved by a furin endopeptidase. In terms of tissue distribution, expressed in brain, leukocytes, colon, ovary testis and breast cancer. Expressed also in many transformed and non-transformed cell types.

It localises to the cell membrane. The protein resides in the secreted. Its subcellular location is the extracellular space. It is found in the extracellular matrix. Its function is as follows. Endopeptidase that degrades various components of the extracellular matrix, such as fibrin. May be involved in the activation of membrane-bound precursors of growth factors or inflammatory mediators, such as tumor necrosis factor-alpha. May also be involved in tumoral process. Cleaves pro-TNF-alpha at the '74-Ala-|-Gln-75' site. Not obvious if able to proteolytically activate progelatinase A. Does not hydrolyze collagen types I, II, III, IV and V, gelatin, fibronectin, laminin, decorin nor alpha1-antitrypsin. The protein is Matrix metalloproteinase-17 (MMP17) of Homo sapiens (Human).